The following is a 353-amino-acid chain: C-C chemokine receptor type 8 (353 aa).

The Extracellular segment spans residues Met-1–Met-33. N-linked (GlcNAc...) asparagine glycosylation is present at Asn-8. Residues Leu-34–Cys-61 form a helical membrane-spanning segment. Over Lys-62–Tyr-71 the chain is Cytoplasmic. Residues Leu-72–His-91 form a helical membrane-spanning segment. Residues Asn-92–Lys-105 lie on the Extracellular side of the membrane. Cysteines 104 and 181 form a disulfide. Residues Val-106 to Val-127 traverse the membrane as a helical segment. Topologically, residues Asp-128–Thr-144 are cytoplasmic. Residues Ala-145 to Phe-169 traverse the membrane as a helical segment. The Extracellular segment spans residues Tyr-170–Ile-200. The helical transmembrane segment at Asn-201–Leu-220 threads the bilayer. The Cytoplasmic portion of the chain corresponds to Gln-221–Lys-236. Residues Leu-237–Leu-261 form a helical membrane-spanning segment. Residues His-262–Leu-278 are Extracellular-facing. Residues Ala-279–Gly-302 traverse the membrane as a helical segment. The Cytoplasmic segment spans residues Glu-303–Leu-353.

This sequence belongs to the G-protein coupled receptor 1 family. Expressed in thymus.

The protein resides in the cell membrane. Its function is as follows. Receptor for the CCL1/SCY1/TCA-3 chemokine. In Mus musculus (Mouse), this protein is C-C chemokine receptor type 8 (Ccr8).